Consider the following 3033-residue polypeptide: Genome polyprotein (3033 aa).

Ser-2 bears the N-acetylserine; by host mark. Residues 2 to 23 (STNPKPQRKTKRNTNRRPQDVK) form an interaction with STAT1 region. Residues 2–58 (STNPKPQRKTKRNTNRRPQDVKFPGGGQIVGGVYLLPRRGPRLGVRATRKTSERSQP) form an interaction with EIF2AK2/PKR region. The interval 2–59 (STNPKPQRKTKRNTNRRPQDVKFPGGGQIVGGVYLLPRRGPRLGVRATRKTSERSQPR) is interaction with DDX3X. The disordered stretch occupies residues 2–75 (STNPKPQRKT…PKDRRSAGKS (74 aa)). Topologically, residues 2-168 (STNPKPQRKT…EDGINYATGN (167 aa)) are cytoplasmic. 2 short sequence motifs (nuclear localization signal) span residues 5–13 (PKPQRKTKR) and 38–43 (PRRGPR). Over residues 7–16 (PQRKTKRNTN) the composition is skewed to basic residues. The segment covering 32–47 (GGVYLLPRRGPRLGVR) has biased composition (low complexity). Ser-53 carries the phosphoserine; by host modification. 2 short sequence motifs (nuclear localization signal) span residues 58–64 (PRGRRQP) and 66–71 (PKDRRS). Phosphoserine; by host is present on residues Ser-99 and Ser-116. Residues 112–152 (PRHRSRNLGKVIDTLTCGFADLMGYIPVVGAPVGGVARALA) are important for endoplasmic reticulum and mitochondrial localization. Residues 122–173 (VIDTLTCGFADLMGYIPVVGAPVGGVARALAHGVRVLEDGINYATGNLPGCS) are interaction with APOA2. Residues 164 to 167 (YATG) are important for lipid droplets localization. A helical transmembrane segment spans residues 169–189 (LPGCSFSIFLLALLSCMSVPV). A propeptide spans 178–191 (LLALLSCMSVPVSA) (ER anchor for the core protein, removed in mature form by host signal peptidase). Over 190 to 358 (SAVEVKNTSQ…TGAHWGVMFG (169 aa)) the chain is Lumenal. Residues Asn-196, Asn-209, and Asn-234 are each glycosylated (N-linked (GlcNAc...) asparagine; by host). The tract at residues 265–296 (IVVSATFCSALYIGDVCGAIMIAAQATIISPQ) is important for fusion. N-linked (GlcNAc...) asparagine; by host glycosylation occurs at Asn-305. Residues 359–379 (LAYFSMQGAWAKVVVILLLTA) form a helical membrane-spanning segment. The Lumenal portion of the chain corresponds to 380 to 729 (GVDAQTHTIS…WEWVVLLFLL (350 aa)). The interval 385-412 (THTISGHAARTTHGLVSLFTPGSQQNIQ) is HVR1. 3 N-linked (GlcNAc...) (high mannose) asparagine; by host glycosylation sites follow: Asn-417, Asn-423, and Asn-430. 4 disulfide bridges follow: Cys-429–Cys-554, Cys-452–Cys-459, Cys-488–Cys-496, and Cys-505–Cys-510. Residue Asn-448 is glycosylated (N-linked (GlcNAc...) asparagine; by host). The tract at residues 475-480 (EENVTN) is HVR2. Residue Asn-477 is glycosylated (N-linked (GlcNAc...) asparagine; by host). The interval 482 to 495 (DNMRPYCWHYPPRP) is CD81-binding 1. Residue Asn-534 is glycosylated (N-linked (GlcNAc...) asparagine; by host). The interval 546–553 (PPRGAWFG) is CD81-binding 2. An N-linked (GlcNAc...) asparagine; by host glycan is attached at Asn-558. Disulfide bonds link Cys-566/Cys-571, Cys-585/Cys-589, Cys-601/Cys-624, and Cys-611/Cys-648. 2 N-linked (GlcNAc...) (high mannose) asparagine; by host glycosylation sites follow: Asn-627 and Asn-649. Cys-656 and Cys-681 are joined by a disulfide. The PKR/eIF2-alpha phosphorylation homology domain (PePHD) stretch occupies residues 664 to 675 (SQLSPLLHSTTE). A helical transmembrane segment spans residues 730–750 (LADARVCACLWMLLLLGQAEA). The Lumenal segment spans residues 751-761 (ALEKLVILHAA). Residues 762-782 (SAASSHGMLCFIIFFIAAWYI) traverse the membrane as a helical segment. Topologically, residues 783 to 786 (KGRV) are cytoplasmic. The helical transmembrane segment at 787–807 (TPLVTYSYLGMWSFSLLLLAL) threads the bilayer. Residues 808–817 (PQQAYALDTT) lie on the Lumenal side of the membrane. The helical transmembrane segment at 818-838 (EQGQIGLVLLVVISVFTLSPA) threads the bilayer. Topologically, residues 839 to 885 (YKILLCRSLWWLSYLLVRAEALIQDWVPPWQARGGRDGIIWAATIFC) are cytoplasmic. Residues 886–906 (PGVLFDITNWLLAILGPGYLL) form a helical membrane-spanning segment. The Peptidase C18 domain occupies 903 to 1030 (GYLLRSVLTS…EYTSKGWKLL (128 aa)). Residues 907–932 (RSVLTSTPYFVRAQALLRICAAVRHL) lie on the Lumenal side of the membrane. A protease NS2-3 region spans residues 908–1210 (SVLTSTPYFV…PIESLDVIIR (303 aa)). The S-palmitoyl cysteine; by host moiety is linked to residue Cys-926. A helical membrane pass occupies residues 933–953 (SGGKYVQMMLLTLGKWTGTYI). The segment at 933–953 (SGGKYVQMMLLTLGKWTGTYI) is interaction with host SCPS1. Residues 954–1661 (YDHLSPMSGW…CMQADLEIMT (708 aa)) lie on the Cytoplasmic side of the membrane. Residues His-956, Glu-976, and Cys-997 each act as for protease NS2 activity; shared with dimeric partner in the active site. Residues 1031–1212 (APITAYAQQT…ESLDVIIRSP (182 aa)) form the Peptidase S29 domain. Catalysis depends on charge relay system; for serine protease NS3 activity residues His-1087 and Asp-1111. Cys-1127 and Cys-1129 together coordinate Zn(2+). The active-site Charge relay system; for serine protease NS3 activity is the Ser-1169. Residues Cys-1175 and His-1179 each coordinate Zn(2+). The Helicase ATP-binding domain occupies 1221–1373 (PAVPQTYQVG…PNIEEVALGH (153 aa)). Residue 1234 to 1241 (APTGSGKS) participates in ATP binding. 2 residues coordinate Mg(2+): Ser-1241 and Glu-1321. A DECH box motif is present at residues 1320–1323 (DECH). Residues 1490–1502 (QRRGRTGRGRLGI) are RNA-binding. Residues 1662 to 1682 (STWVLAGGVLAAIAAYCLATG) traverse the membrane as a helical segment. The tract at residues 1683-1694 (CVVCIGRVNINQ) is NS3-binding. Over 1683-1809 (CVVCIGRVNI…ALTSPLPTST (127 aa)) the chain is Cytoplasmic. The chain crosses the membrane as a helical span at residues 1810 to 1830 (TILLNIMGGWLASQIAPAAGA). Over 1831-1832 (TG) the chain is Lumenal. A helical membrane pass occupies residues 1833-1853 (FVVSGLVGAAVGSIGLGKILV). Position 1854 (Asp-1854) is a topological domain, cytoplasmic. The chain crosses the membrane as a helical span at residues 1855 to 1875 (VLAGYGAGISGALVAFKIMSG). Over 1876-1885 (EKPSVEDVVN) the chain is Lumenal. The chain crosses the membrane as a helical span at residues 1886–1906 (LLPGILSPGALVVGVICAAIL). Residues 1907–1976 (RRHVGQGEGA…WITEDCPVPC (70 aa)) are Cytoplasmic-facing. Residue Cys-1976 is the site of S-palmitoyl cysteine; by host attachment. The stretch at 1977 to 2007 (AGSWLRDIWDWACTILTDFKNWLSTKLLPKM) is an intramembrane region. Over 2008–3012 (PGLPFISCQR…YHSVSRARPR (1005 aa)) the chain is Cytoplasmic. Cys-2015, Cys-2033, Cys-2035, and Cys-2056 together coordinate Zn(2+). Residues 2124 to 2212 (EFFSWVDGVQ…ASSSASQLSA (89 aa)) form an FKBP8-binding region. The segment at 2124 to 2332 (EFFSWVDGVQ…PTPPPRRRRA (209 aa)) is transcriptional activation. An interaction with non-structural protein 4A region spans residues 2139 to 2143 (PTPKP). The disordered stretch occupies residues 2193 to 2212 (RLARGSPPSEASSSASQLSA). An interaction with host SKP2 region spans residues 2193–2460 (RLARGSPPSE…ALITPCGPEE (268 aa)). 6 positions are modified to phosphoserine; by host: Ser-2198, Ser-2201, Ser-2205, Ser-2208, Ser-2211, and Ser-2214. Over residues 2198 to 2212 (SPPSEASSSASQLSA) the composition is skewed to low complexity. Positions 2214–2249 (SLRATCTAHAKNYAVEMVDANFFMGSDVTRIESETK) are ISDR. An interaction with EIF2AK2/PKR region spans residues 2214-2275 (SLRATCTAHA…REPSVPSEYL (62 aa)). Residues 2249-2306 (KVLILDSLDPSVEEEDEREPSVPSEYLLPKKKFPQALPVWARPDYNPPVVETWKRPDY) are NS4B-binding. Residues 2299–2376 (ETWKRPDYDP…MDTTDATDQP (78 aa)) are V3. The disordered stretch occupies residues 2308–2328 (PPTVSGCALPPRVTAPTPPPR). The short motif at 2322 to 2325 (APTP) is the SH3-binding element. The short motif at 2327 to 2335 (PRRRRALVL) is the Nuclear localization signal element. Lys-2350 is covalently cross-linked (Glycyl lysine isopeptide (Lys-Gly) (interchain with G-Cter in ubiquitin)). The disordered stretch occupies residues 2353–2431 (GQLPPSCDSG…PDLDSGSWST (79 aa)). Polar residues predominate over residues 2361–2373 (SGRSTGMDTTDAT). A phosphoserine; by host mark is found at Ser-2471 and Ser-2484. The RdRp catalytic domain occupies 2656–2774 (PMGFSYDTRC…ISESQGAEED (119 aa)). Mg(2+)-binding residues include Asp-2662, Asp-2760, and Asp-2761. A helical membrane pass occupies residues 3013–3033 (FLLLCLLLLSVGVGIFLLPAR).

The protein belongs to the hepacivirus polyprotein family. In terms of assembly, homooligomer. Interacts with E1 (via C-terminus). Interacts with the non-structural protein 5A. Interacts (via N-terminus) with host STAT1 (via SH2 domain); this interaction results in decreased STAT1 phosphorylation and ubiquitin-mediated proteasome-dependent STAT1 degradation, leading to decreased IFN-stimulated gene transcription. Interacts with host STAT3; this interaction constitutively activates STAT3. Interacts with host LTBR receptor. Interacts with host TNFRSF1A receptor and possibly induces apoptosis. Interacts with host HNRPK. Interacts with host YWHAE. Interacts with host UBE3A/E6AP. Interacts with host DDX3X. Interacts with host APOA2. Interacts with host RXRA protein. Interacts with host SP110 isoform 3/Sp110b; this interaction sequesters the transcriptional corepressor SP110 away from the nucleus. Interacts with host CREB3 nuclear transcription protein; this interaction triggers cell transformation. Interacts with host ACY3. Interacts with host C1QR1. Interacts with host RBM24; this interaction, which enhances the interaction of the mature core protein with 5'-UTR, may inhibit viral translation and favor replication. Interacts with host EIF2AK2/PKR; this interaction induces the autophosphorylation of EIF2AK2. Part of the viral assembly initiation complex composed of NS2, E1, E2, NS3, NS4A, NS5A and the mature core protein. Forms a heterodimer with envelope glycoprotein E2. Interacts with mature core protein. Interacts with protease NS2. The heterodimer E1/E2 interacts with host CLDN1; this interaction plays a role in viral entry into host cell. Interacts with host SPSB2 (via C-terminus). Part of the viral assembly initiation complex composed of NS2, E1, E2, NS3, NS4A, NS5A and the mature core protein. Interacts with host NEURL3; this interaction prevents E1 binding to glycoprotein E2. As to quaternary structure, forms a heterodimer with envelope glycoprotein E1. Interacts with host CD81 and SCARB1 receptors; these interactions play a role in viral entry into host cell. Interacts with host EIF2AK2/PKR; this interaction inhibits EIF2AK2 and probably allows the virus to evade the innate immune response. Interacts with host CD209/DC-SIGN and CLEC4M/DC-SIGNR. Interact with host SPCS1; this interaction is essential for viral particle assembly. Interacts with protease NS2. The heterodimer E1/E2 interacts with host CLDN1; this interaction plays a role in viral entry into host cell. Part of the viral assembly initiation complex composed of NS2, E1, E2, NS3, NS4A, NS5A and the mature core protein. Interacts with host SLC3A2/4F2hc; the interaction may facilitate viral entry into host cell. Interacts with human PLSCR1. In terms of assembly, homohexamer. Homoheptamer. Interacts with protease NS2. Homodimer. Interacts with host SPCS1; this interaction is essential for viral particle assembly. Interacts with envelope glycoprotein E1. Interacts with envelope glycoprotein E2. Interacts with viroporin p7. Interacts with serine protease/helicase NS3. Part of the replication complex composed of NS2, NS3, NS4A, NS4B, NS5A and the RNA-directed RNA polymerase embedded in an ER-derived membranous web. Part of the viral assembly initiation complex composed of NS2, E1, E2, NS3, NS4A, NS5A and the mature core protein. As to quaternary structure, interacts with protease NS2. Interacts with non-structural protein 4A; this interaction stabilizes the folding of NS3 serine protease. NS3-NS4A interaction is essential for NS3 activation and allows membrane anchorage of the latter. NS3/NS4A complex also prevents phosphorylation of host IRF3, thus preventing the establishment of dsRNA induced antiviral state. Interacts with host MAVS; this interaction leads to the cleavage and inhibition of host MAVS. Interacts with host TICAM1; this interaction leads to the cleavage and inhibition of host TICAM1. Interacts with host TANK-binding kinase/TBK1; this interaction results in the inhibition of the association between TBK1 and IRF3, which leads to the inhibition of IRF3 activation. Interacts with host RBM24. Part of the replication complex composed of NS2, NS3, NS4A, NS4B, NS5A and the RNA-directed RNA polymerase embedded in an ER-derived membranous web. Part of the viral assembly initiation complex composed of NS2, E1, E2, NS3, NS4A, NS5A and the mature core protein. In terms of assembly, interacts with NS3 serine protease; this interaction stabilizes the folding of NS3 serine protease. NS3-NS4A interaction is essential for NS3 activation and allows membrane anchorage of the latter. Interacts with non-structural protein 5A (via N-terminus). Part of the replication complex composed of NS2, NS3, NS4A, NS4B, NS5A and the RNA-directed RNA polymerase embedded in an ER-derived membranous web. Part of the viral assembly initiation complex composed of NS2, E1, E2, NS3, NS4A, NS5A and the mature core protein. Homomultimer. Interacts with non-structural protein NS5A. Interacts with host PLA2G4C; this interaction likely initiates the recruitment of replication complexes to lipid droplets. Interacts with host STING; this interaction disrupts the interaction between STING and TBK1 thereby suppressing the interferon signaling. Part of the replication complex composed of NS2, NS3, NS4A, NS4B, NS5A and the RNA-directed RNA polymerase embedded in an ER-derived membranous web. As to quaternary structure, monomer. Homodimer; dimerization is required for RNA-binding. Interacts with the mature core protein. Interacts (via N-terminus) with non-structural protein 4A. Interacts with non-structural protein 4B. Interacts (via region D2) with RNA-directed RNA polymerase. Part of the viral assembly initiation complex composed of NS2, E1, E2, NS3, NS4A, NS5A and the mature core protein. Part of the replication complex composed of NS2, NS3, NS4A, NS4B, NS5A and the RNA-directed RNA polymerase embedded in an ER-derived membranous web. Interacts with host GRB2. Interacts with host BIN1. Interacts with host PIK3R1. Interacts with host SRCAP. Interacts with host FKBP8. Interacts (via C-terminus) with host VAPB (via MSP domain). Interacts with host EIF2AK2/PKR; this interaction leads to disruption of EIF2AK2 dimerization by NS5A and probably allows the virus to evade the innate immune response. Interacts (via N-terminus) with host PACSIN2 (via N-terminus); this interaction attenuates protein kinase C alpha-mediated phosphorylation of PACSIN2 by disrupting the interaction between PACSIN2 and PRKCA. Interacts (via N-terminus) with host SRC kinase (via SH2 domain). Interacts with most Src-family kinases. Interacts with host IFI27 and SKP2; promotes the ubiquitin-mediated proteasomal degradation of NS5A. Interacts with host GPS2. Interacts with host TNFRSF21; this interaction allows the modulation by the virus of JNK, p38 MAPK, STAT3, and Akt signaling pathways in a DR6-dependent manner. Interacts (via N-terminus) with host CIDEB (via N-terminus); this interaction seems to regulate the association of HCV particles with APOE. Interacts with host CHKA/Choline Kinase-alpha; CHKA bridges host PI4KA and NS5A and potentiates NS5A-stimulated PI4KA activity, which then facilitates the targeting of the ternary complex to the ER for viral replication. Interacts with host SPSB2 (via C-terminus); this interaction targets NS5A for ubiquitination and degradation. Interacts with host RAB18; this interaction may promote the association of NS5A and other replicase components with lipid droplets. Interacts (via region D2) with host PPIA/CYPA; the interaction stimulates RNA-binding ability of NS5A and is dependent on the peptidyl-prolyl cis-trans isomerase activity of PPIA/CYPA. Interacts with host TRIM14; this interaction induces the degradation of NS5A. In terms of assembly, homooligomer. Interacts with non-structural protein 5A. Interacts with host VAPB. Interacts with host PRK2/PKN2. Interacts with host HNRNPA1 and SEPT6; these interactions facilitate viral replication. Part of the replication complex composed of NS2, NS3, NS4A, NS4B, NS5A and the RNA-directed RNA polymerase. Zn(2+) serves as cofactor. It depends on Mg(2+) as a cofactor. In terms of processing, specific enzymatic cleavages in vivo yield mature proteins. The structural proteins, core, E1, E2 and p7 are produced by proteolytic processing by host signal peptidases. The core protein precursor is synthesized as a 23 kDa, which is retained in the ER membrane through the hydrophobic signal peptide. Cleavage by the signal peptidase releases the 21 kDa mature core protein. The cleavage of the core protein precursor occurs between aminoacids 176 and 188 but the exact cleavage site is not known. Some degraded forms of the core protein appear as well during the course of infection. The other proteins (p7, NS2, NS3, NS4A, NS4B, NS5A and NS5B) are cleaved by the viral proteases. Autoprocessing between NS2 and NS3 is mediated by the NS2 cysteine protease catalytic domain and regulated by the NS3 N-terminal domain. Post-translationally, phosphorylated by host PKC and PKA. Ubiquitinated; mediated by UBE3A and leading to core protein subsequent proteasomal degradation. In terms of processing, highly N-glycosylated. Post-translationally, palmitoylation is required for NS2/3 autoprocessing and E2 recruitment to membranes. Palmitoylated. This modification may play a role in its polymerization or in protein-protein interactions. In terms of processing, phosphorylated on serines in a basal form termed p56. p58 is a hyperphosphorylated form of p56. p56 and p58 coexist in the cell in roughly equivalent amounts. Hyperphosphorylation is dependent on the presence of NS4A. Host CSNK1A1/CKI-alpha or RPS6KB1 kinases may be responsible for NS5A phosphorylation. Post-translationally, tyrosine phosphorylation is essential for the interaction with host SRC. Ubiquitinated. Ubiquitination, most probably at Lys-2350, mediated by host IFI27 and SKP2 leads to proteasomal degradation, restricting viral infection. Ubiquitination by host TRIM22 leads to interruption of viral replication. In terms of processing, the N-terminus is phosphorylated by host PRK2/PKN2.

The protein resides in the host endoplasmic reticulum membrane. Its subcellular location is the host mitochondrion membrane. It is found in the virion. The protein localises to the host cytoplasm. It localises to the host nucleus. The protein resides in the host lipid droplet. Its subcellular location is the virion membrane. It is found in the host mitochondrion. The protein localises to the host cell membrane. It localises to the host perinuclear region. The enzyme catalyses Hydrolysis of four peptide bonds in the viral precursor polyprotein, commonly with Asp or Glu in the P6 position, Cys or Thr in P1 and Ser or Ala in P1'.. It catalyses the reaction a ribonucleoside 5'-triphosphate + H2O = a ribonucleoside 5'-diphosphate + phosphate + H(+). It carries out the reaction ATP + H2O = ADP + phosphate + H(+). The catalysed reaction is RNA(n) + a ribonucleoside 5'-triphosphate = RNA(n+1) + diphosphate. Its activity is regulated as follows. Inhibited by the antiviral drug hexamethylene amiloride. Inhibition by amantadine appears to be genotype-dependent. Also inhibited by long-alkyl-chain iminosugar derivatives. Activity is up-regulated by PRK2/PKN2-mediated phosphorylation. In terms of biological role, packages viral RNA to form a viral nucleocapsid, and promotes virion budding. Participates in the viral particle production as a result of its interaction with the non-structural protein 5A. Binds RNA and may function as a RNA chaperone to induce the RNA structural rearrangements taking place during virus replication. Modulates viral translation initiation by interacting with viral IRES and 40S ribosomal subunit. Affects various cell signaling pathways, host immunity and lipid metabolism. Prevents the establishment of cellular antiviral state by blocking the interferon-alpha/beta (IFN-alpha/beta) and IFN-gamma signaling pathways and by blocking the formation of phosphorylated STAT1 and promoting ubiquitin-mediated proteasome-dependent degradation of STAT1. Activates STAT3 leading to cellular transformation. Regulates the activity of cellular genes, including c-myc and c-fos. May repress the promoter of p53, and sequester CREB3 and SP110 isoform 3/Sp110b in the cytoplasm. Represses cell cycle negative regulating factor CDKN1A, thereby interrupting an important check point of normal cell cycle regulation. Targets transcription factors involved in the regulation of inflammatory responses and in the immune response: suppresses TNF-induced NF-kappa-B activation, and activates AP-1. Binds to dendritic cells (DCs) via C1QR1, resulting in down-regulation of T-lymphocytes proliferation. Alters lipid metabolism by interacting with hepatocellular proteins involved in lipid accumulation and storage. Induces up-regulation of FAS promoter activity, and thereby contributes to the increased triglyceride accumulation in hepatocytes (steatosis). Forms a heterodimer with envelope glycoprotein E2, which mediates virus attachment to the host cell, virion internalization through clathrin-dependent endocytosis and fusion with host membrane. Fusion with the host cell is most likely mediated by both E1 and E2, through conformational rearrangements of the heterodimer required for fusion rather than a classical class II fusion mechanism. E1/E2 heterodimer binds host apolipoproteins such as APOB and ApoE thereby forming a lipo-viro-particle (LVP). APOE associated to the LVP allows the initial virus attachment to cell surface receptors such as the heparan sulfate proteoglycans (HSPGs), syndecan-1 (SDC1), syndecan-1 (SDC2), the low-density lipoprotein receptor (LDLR) and scavenger receptor class B type I (SCARB1). The cholesterol transfer activity of SCARB1 allows E2 exposure and binding of E2 to SCARB1 and the tetraspanin CD81. E1/E2 heterodimer binding on CD81 activates the epithelial growth factor receptor (EGFR) signaling pathway. Diffusion of the complex E1-E2-EGFR-SCARB1-CD81 to the cell lateral membrane allows further interaction with Claudin 1 (CLDN1) and occludin (OCLN) to finally trigger HCV entry. Its function is as follows. Forms a heterodimer with envelope glycoprotein E1, which mediates virus attachment to the host cell, virion internalization through clathrin-dependent endocytosis and fusion with host membrane. Fusion with the host cell is most likely mediated by both E1 and E2, through conformational rearrangements of the heterodimer required for fusion rather than a classical class II fusion mechanism. The interaction between envelope glycoprotein E2 and host apolipoprotein E/APOE allows the proper assembly, maturation and infectivity of the viral particles. This interaction is probably promoted via the up-regulation of cellular autophagy by the virus. E1/E2 heterodimer binds host apolipoproteins such as APOB and APOE thereby forming a lipo-viro-particle (LVP). APOE associated to the LVP allows the initial virus attachment to cell surface receptors such as the heparan sulfate proteoglycans (HSPGs), syndecan-1 (SDC1), syndecan-1 (SDC2), the low-density lipoprotein receptor (LDLR) and scavenger receptor class B type I (SCARB1). The cholesterol transfer activity of SCARB1 allows E2 exposure and binding of E2 to SCARB1 and the tetraspanin CD81. E1/E2 heterodimer binding on CD81 activates the epithelial growth factor receptor (EGFR) signaling pathway. Diffusion of the complex E1-E2-EGFR-SCARB1-CD81 to the cell lateral membrane allows further interaction with Claudin 1 (CLDN1) and occludin (OCLN) to finally trigger HCV entry. Inhibits host EIF2AK2/PKR activation, preventing the establishment of an antiviral state. Viral ligand for CD209/DC-SIGN and CLEC4M/DC-SIGNR, which are respectively found on dendritic cells (DCs), and on liver sinusoidal endothelial cells and macrophage-like cells of lymph node sinuses. These interactions allow the capture of circulating HCV particles by these cells and subsequent facilitated transmission to permissive cells such as hepatocytes and lymphocyte subpopulations. The interaction between E2 and host amino acid transporter complex formed by SLC3A2 and SLC7A5/LAT1 may facilitate viral entry into host cell. Functionally, ion channel protein that acts as a viroporin and plays an essential role in the assembly, envelopment and secretion of viral particles. Regulates the host cell secretory pathway, which induces the intracellular retention of viral glycoproteins and favors assembly of viral particles. Creates a pore in acidic organelles and releases Ca(2+) and H(+) in the cytoplasm of infected cells, leading to a productive viral infection. High levels of cytoplasmic Ca(2+) may trigger membrane trafficking and transport of viral ER-associated proteins to viroplasms, sites of viral genome replication. This ionic imbalance induces the assembly of the inflammasome complex, which triggers the maturation of pro-IL-1beta into IL-1beta through the action of caspase-1. Targets also host mitochondria and induces mitochondrial depolarization. In addition of its role as a viroporin, acts as a lipid raft adhesion factor. In terms of biological role, cysteine protease required for the proteolytic auto-cleavage between the non-structural proteins NS2 and NS3. The N-terminus of NS3 is required for the function of NS2 protease (active region NS2-3). Promotes the initiation of viral particle assembly by mediating the interaction between structural and non-structural proteins. Displays three enzymatic activities: serine protease with a chymotrypsin-like fold, NTPase and RNA helicase. NS3 serine protease, in association with NS4A, is responsible for the cleavages of NS3-NS4A, NS4A-NS4B, NS4B-NS5A and NS5A-NS5B. The NS3/NS4A complex prevents phosphorylation of host IRF3, thus preventing the establishment of dsRNA induced antiviral state. The NS3/NS4A complex induces host amino acid transporter component SLC3A2, thus contributing to HCV propagation. NS3 RNA helicase binds to RNA and unwinds both dsDNA and dsRNA in the 3' to 5' direction, and likely resolves RNA complicated stable secondary structures in the template strand. Binds a single ATP and catalyzes the unzipping of a single base pair of dsRNA. Inhibits host antiviral proteins TBK1 and IRF3 thereby preventing the establishment of an antiviral state. Cleaves host MAVS/CARDIF thereby preventing the establishment of an antiviral state. Cleaves host TICAM1/TRIF, thereby disrupting TLR3 signaling and preventing the establishment of an antiviral state. Its function is as follows. Peptide cofactor which forms a non-covalent complex with the N-terminal of NS3 serine protease. The NS3/NS4A complex prevents phosphorylation of host IRF3, thus preventing the establishment of dsRNA induced antiviral state. The NS3/NS4A complex induces host amino acid transporter component SLC3A2, thus contributing to HCV propagation. Functionally, induces a specific membrane alteration that serves as a scaffold for the virus replication complex. This membrane alteration gives rise to the so-called ER-derived membranous web that contains the replication complex. NS4B self-interaction contributes to its function in membranous web formation. Promotes host TRIF protein degradation in a CASP8-dependent manner thereby inhibiting host TLR3-mediated interferon signaling. Disrupts the interaction between STING and TBK1 contributing to the inhibition of interferon signaling. In terms of biological role, phosphorylated protein that is indispensable for viral replication and assembly. Both hypo- and hyperphosphorylated states are required for the viral life cycle. The hyperphosphorylated form of NS5A is an inhibitor of viral replication. Involved in RNA-binding and especially in binding to the viral genome. Zinc is essential for RNA-binding. Participates in the viral particle production as a result of its interaction with the mature viral core protein. Its interaction with host VAPB may target the viral replication complex to vesicles. Down-regulates viral IRES translation initiation. Mediates interferon resistance, presumably by interacting with and inhibiting host EIF2AK2/PKR. Prevents BIN1-induced apoptosis. Acts as a transcriptional activator of some host genes important for viral replication when localized in the nucleus. Via the interaction with host PACSIN2, modulates lipid droplet formation in order to promote virion assembly. Modulates TNFRSF21/DR6 signaling pathway for viral propagation. RNA-dependent RNA polymerase that performs primer-template recognition and RNA synthesis during viral replication. Initiates RNA transcription/replication at a flavin adenine dinucleotide (FAD), resulting in a 5'- FAD cap on viral RNAs. In this way, recognition of viral 5' RNA by host pattern recognition receptors can be bypassed, thereby evading activation of antiviral pathways. The chain is Genome polyprotein from Hepatitis C virus genotype 2k (isolate VAT96) (HCV).